The chain runs to 199 residues: Imidazoleglycerol-phosphate dehydratase (199 aa).

The protein belongs to the imidazoleglycerol-phosphate dehydratase family.

It localises to the cytoplasm. The catalysed reaction is D-erythro-1-(imidazol-4-yl)glycerol 3-phosphate = 3-(imidazol-4-yl)-2-oxopropyl phosphate + H2O. The protein operates within amino-acid biosynthesis; L-histidine biosynthesis; L-histidine from 5-phospho-alpha-D-ribose 1-diphosphate: step 6/9. In Kineococcus radiotolerans (strain ATCC BAA-149 / DSM 14245 / SRS30216), this protein is Imidazoleglycerol-phosphate dehydratase.